The primary structure comprises 463 residues: Homoserine O-acetyltransferase FUB5 (463 aa).

The 324-residue stretch at asparagine 113–leucine 436 folds into the AB hydrolase-1 domain. Serine 211 (nucleophile) is an active-site residue. Over residues arginine 296 to serine 312 the composition is skewed to basic and acidic residues. Positions arginine 296–threonine 331 are disordered. Catalysis depends on residues aspartate 403 and histidine 432.

Belongs to the AB hydrolase superfamily. MetX family.

The catalysed reaction is L-homoserine + acetyl-CoA = O-acetyl-L-homoserine + CoA. It functions in the pathway mycotoxin biosynthesis. In terms of biological role, homoserine O-acetyltransferase; part of the gene cluster that mediates the biosynthesis of fusaric acid, a mycotoxin with low to moderate toxicity to animals and humans, but with high phytotoxic properties. L-aspartate is suggested as fusaric acid amino acid precursor that is activated and further processed to O-acetyl-L-homoserine by cluster enzymes aspartate kinase FUB3 and homoserine O-acetyltransferase FUB5, as well as enzymes of the primary metabolism. The polyketide synthase (PKS) FUB1 generates the triketide trans-2-hexenal which is presumptively released by the hydrolase FUB4 and linked to the NRPS-bound amino acid precursor by NAD(P)-dependent dehydrogenase FUB6. FUB1, FUB4, and the non-canonical NRPS Fub8 may form an enzyme complex. Further processing of the NRPS-bound intermediate might be carried out by FUB6 and the sulfhydrylase FUB7, enabling a spontaneous electrocyclization to close the carbon backbone of fusaric acid. Dihydrofusaric acid is likely to be released via reduction by the thioester reductase (TR) domain of FUB8 whereupon the final oxidation to fusaric acid may (also) be performed by the FMN-dependent dehydrogenase FUB9. The sequence is that of Homoserine O-acetyltransferase FUB5 from Gibberella moniliformis (strain M3125 / FGSC 7600) (Maize ear and stalk rot fungus).